Consider the following 497-residue polypeptide: Di-/tripeptide transporter (497 aa).

Residues 1 to 36 lie on the Cytoplasmic side of the membrane; that stretch reads MQNLNKTEKTFFGQPRGLLTLFQTEFWERFSYYGMR. A helical transmembrane segment spans residues 37-55; that stretch reads AILVYYLYALTTADNAGLG. Topologically, residues 56-64 are extracellular; it reads LPKAQAMAI. Residues 65–83 traverse the membrane as a helical segment; sequence VSIYGALVYLSTIVGGWVA. Topologically, residues 84–92 are cytoplasmic; the sequence is DRLLGASRT. Residues 93–111 traverse the membrane as a helical segment; the sequence is IFLGGILITLGHVALATPF. At 112–115 the chain is on the extracellular side; sequence GLSS. Residues 116–134 traverse the membrane as a helical segment; sequence LFVALFLIILGTGMLKPNI. Over 135–154 the chain is Cytoplasmic; the sequence is SNMVGHLYSKDDSRRDTGFN. Residues 155–173 traverse the membrane as a helical segment; it reads IFVVGINMGSLIAPLIVGT. The Extracellular portion of the chain corresponds to 174 to 181; sequence VGQGVNYH. The chain crosses the membrane as a helical span at residues 182 to 200; that stretch reads LGFSLAAIGMIFALFAYWY. Residues 201-224 are Cytoplasmic-facing; it reads GRLRHFPEIGREPSNPMDAKAKRN. A helical transmembrane segment spans residues 225-243; the sequence is FIITLTIVLIVALIGFFLI. Topologically, residues 244-254 are extracellular; it reads YQASPANFINN. The chain crosses the membrane as a helical span at residues 255-273; the sequence is FINVLSIIGIVVPIIYFVM. Residues 274–293 are Cytoplasmic-facing; that stretch reads MFTSKKVESDERRKLTAYIP. Residues 294-312 traverse the membrane as a helical segment; sequence LFLSAIVFWAIEEQSSTII. The Extracellular portion of the chain corresponds to 313–335; it reads AVWGESRSNLNPTWFGFTFHIDP. The chain crosses the membrane as a helical span at residues 336 to 354; the sequence is SWYQLLNPLFIVLLSPIFV. At 355-372 the chain is on the cytoplasmic side; sequence RIWNKLGDRQPSTIVKFG. Residues 373–391 form a helical membrane-spanning segment; it reads LGLMLTGASYLIMTLPGLL. Topologically, residues 392-425 are extracellular; sequence NGTSGRASALWLVLMFAVQMAGELLVSPVGLSVS. The helical transmembrane segment at 426-444 threads the bilayer; that stretch reads TKLAPVAFQSQMMAMWFLA. Residues 445-497 are Cytoplasmic-facing; sequence DSTSQAINAQITPIFKAATEVHFFAITGIIGIIVGIILLIIKKPILKLMGDVR.

This sequence belongs to the major facilitator superfamily. Proton-dependent oligopeptide transporter (POT/PTR) (TC 2.A.17) family.

Its subcellular location is the cell membrane. In terms of biological role, proton-dependent uptake of di- or tri-peptides. In Lactococcus lactis subsp. cremoris (Streptococcus cremoris), this protein is Di-/tripeptide transporter (dtpT).